The sequence spans 302 residues: Bifunctional protein FolD (302 aa).

NADP(+)-binding positions include G168–S170, T197, and V238.

This sequence belongs to the tetrahydrofolate dehydrogenase/cyclohydrolase family. In terms of assembly, homodimer.

The enzyme catalyses (6R)-5,10-methylene-5,6,7,8-tetrahydrofolate + NADP(+) = (6R)-5,10-methenyltetrahydrofolate + NADPH. The catalysed reaction is (6R)-5,10-methenyltetrahydrofolate + H2O = (6R)-10-formyltetrahydrofolate + H(+). It participates in one-carbon metabolism; tetrahydrofolate interconversion. Catalyzes the oxidation of 5,10-methylenetetrahydrofolate to 5,10-methenyltetrahydrofolate and then the hydrolysis of 5,10-methenyltetrahydrofolate to 10-formyltetrahydrofolate. This Desulfatibacillum aliphaticivorans protein is Bifunctional protein FolD.